Reading from the N-terminus, the 126-residue chain is uncharacterized protein (126 aa).

The segment at 83–126 (VPPPLDRSHESPEEFFPPQNRNRGGGPKAQIQRHPPEALEKTTH) is disordered. Positions 116 to 126 (HPPEALEKTTH) are enriched in basic and acidic residues.

This is an uncharacterized protein from Galliformes (FAdV-1).